Consider the following 132-residue polypeptide: MTMTDPIADMLTRVRNANMVRHEKLELPASNIKKQIAEILKSEGFIKNVEYVEDDKQGVIRLFLKYGQNNERVITGLKRISKPGLRVYAKANEVPKVLNGLGIALVSTSEGVITDKEARKRNVGGEIIAYVW.

It belongs to the universal ribosomal protein uS8 family. Part of the 30S ribosomal subunit. Contacts proteins S5 and S12.

In terms of biological role, one of the primary rRNA binding proteins, it binds directly to 16S rRNA central domain where it helps coordinate assembly of the platform of the 30S subunit. The sequence is that of Small ribosomal subunit protein uS8 from Staphylococcus haemolyticus (strain JCSC1435).